A 157-amino-acid polypeptide reads, in one-letter code: UPF0212 protein rrnAC1165 (157 aa).

The disordered stretch occupies residues 105–157; it reads VLEIEEIPEESDETTEDESSSAESEADADDPPSDQSADESDDVLPEFEELIDE. A compositionally biased stretch (acidic residues) spans 106–157; sequence LEIEEIPEESDETTEDESSSAESEADADDPPSDQSADESDDVLPEFEELIDE.

The protein belongs to the UPF0212 family.

This is UPF0212 protein rrnAC1165 from Haloarcula marismortui (strain ATCC 43049 / DSM 3752 / JCM 8966 / VKM B-1809) (Halobacterium marismortui).